A 273-amino-acid chain; its full sequence is MSLSNAPLGQHVAYPSQYDPGLLFPIPRATNRASLQLGAALPFTGVDLWNAYELSWLDARGKPRVAMATFSFPADSPNIVESKSFKLYLNSFNQTRLPNAQALRDRLERDLAAAAGAPVGLEFISPQRFGELNMAELDGIYIDKLDIEIDTYEPAPQLLQCAPGDEVEETLATRLLKSNCPVTGQPDWASLQVRYRGRPIDRAALLKYVVSFRQHAEFHEHCVERIFGDIMRACQPRQLTVYARYTRRGGLDINPWRSNFESAPPADVRTARQ.

Residue 80 to 82 (VES) participates in substrate binding. 82 to 83 (SK) is an NADPH binding site. Catalysis depends on Cys-180, which acts as the Thioimide intermediate. The active-site Proton donor is the Asp-187. 219-220 (HE) is a binding site for substrate. Residue 248–249 (RG) participates in NADPH binding.

The protein belongs to the GTP cyclohydrolase I family. QueF type 2 subfamily. In terms of assembly, homodimer.

It localises to the cytoplasm. It catalyses the reaction 7-aminomethyl-7-carbaguanine + 2 NADP(+) = 7-cyano-7-deazaguanine + 2 NADPH + 3 H(+). Its pathway is tRNA modification; tRNA-queuosine biosynthesis. Catalyzes the NADPH-dependent reduction of 7-cyano-7-deazaguanine (preQ0) to 7-aminomethyl-7-deazaguanine (preQ1). The sequence is that of NADPH-dependent 7-cyano-7-deazaguanine reductase from Bordetella pertussis (strain Tohama I / ATCC BAA-589 / NCTC 13251).